The primary structure comprises 373 residues: Transaldolase (373 aa).

The active-site Schiff-base intermediate with substrate is K143.

This sequence belongs to the transaldolase family. Type 2 subfamily.

The protein resides in the cytoplasm. The enzyme catalyses D-sedoheptulose 7-phosphate + D-glyceraldehyde 3-phosphate = D-erythrose 4-phosphate + beta-D-fructose 6-phosphate. Its pathway is carbohydrate degradation; pentose phosphate pathway; D-glyceraldehyde 3-phosphate and beta-D-fructose 6-phosphate from D-ribose 5-phosphate and D-xylulose 5-phosphate (non-oxidative stage): step 2/3. Its function is as follows. Transaldolase is important for the balance of metabolites in the pentose-phosphate pathway. This chain is Transaldolase, found in Mycobacterium ulcerans (strain Agy99).